Consider the following 807-residue polypeptide: MSGWPRIYYKLLNLPLSILVKSKSIPADPAPELGLDTSRPIMYVLPYNSKADLLTLRAQCLAHDLPDPLEPLEIDGTLLPRYVFIHGGPRVFTYYTPKEESIKLFHDYLDLHRSNPNLDVQMVPVSVMFGRAPGREKGEVNPPLRMLNGVQKFFAVLWLGRDSFVRFSPSVSLRRMADEHGTDKTIAQKLARVARMHFARQRLAAVGPRLPARQDLFNKLLASRAIAKAVEDEARSKKISHEKAQQNAIALMEEIAANFSYEMIRLTDRILGFTWNRLYQGINVHNAERVRQLAHDGHELVYVPCHRSHMDYLLLSYVLYHQGLVPPHIAAGINLNFWPAGPIFRRLGAFFIRRTFKGNKLYSTVFREYLGELFSRGYSVEYFVEGGRSRTGRLLDPKTGTLSMTIQAMLRGGTRPITLIPIYIGYEHVMEVGTYAKELRGATKEKESLPQMLRGLSKLRNLGQGYVNFGEPMPLMTYLNQHVPDWRESIDPIEAVRPAWLTPTVNNIAADLMVRINNAGAANAMNLCCTALLASRQRSLTREQLTEQLNCYLDLMRNVPYSTDSTVPSASASELIDHALQMNKFEVEKDTIGDIIILPREQAVLMTYYRNNIAHMLVLPSLMAAIVTQHRHISRDVLMEHVNVLYPMLKAELFLRWDRDELPDVIDALANEMQRQGLITLQDDELHINPAHSRTLQLLAAGARETLQRYAITFWLLSANPSINRGTLEKESRTVAQRLSVLHGINAPEFFDKAVFSSLVLTLRDEGYISDSGDAEPAETMKVYQLLAELITSDVRLTIESATQGEG.

An HXXXXD motif motif is present at residues 305–310; it reads CHRSHM.

This sequence belongs to the GPAT/DAPAT family.

The protein resides in the cell inner membrane. It catalyses the reaction sn-glycerol 3-phosphate + an acyl-CoA = a 1-acyl-sn-glycero-3-phosphate + CoA. It functions in the pathway phospholipid metabolism; CDP-diacylglycerol biosynthesis; CDP-diacylglycerol from sn-glycerol 3-phosphate: step 1/3. The protein is Glycerol-3-phosphate acyltransferase of Escherichia coli O139:H28 (strain E24377A / ETEC).